A 201-amino-acid chain; its full sequence is CASP-like protein 2B2 (201 aa).

Topologically, residues 1–28 are cytoplasmic; that stretch reads MSYLGVGVSPGNVSGSTTKMKLIDRKVR. A helical transmembrane segment spans residues 29–49; the sequence is VTELILRCLVCVLALVAAILI. The Extracellular segment spans residues 50–71; the sequence is ATDVQVREIFMIQKKAKFTDMK. Residues 72 to 92 form a helical membrane-spanning segment; the sequence is ALVLLVVVNGIAAGYSLVQAV. Over 93–108 the chain is Cytoplasmic; it reads RCVVGLMKGRVLFSKP. The helical transmembrane segment at 109–129 threads the bilayer; it reads LAWAIFFGDQAVAYLCVAGVA. Residues 130–166 lie on the Extracellular side of the membrane; sequence AAAQSAAFAKLGEPELQWMKICNMYGKFCNQVGEGIA. The chain crosses the membrane as a helical span at residues 167-187; sequence SALFACIGMVLISCISAFGVF. The Cytoplasmic portion of the chain corresponds to 188 to 201; it reads RLYGGSKSRPSSRW.

This sequence belongs to the Casparian strip membrane proteins (CASP) family. In terms of assembly, homodimer and heterodimers.

It localises to the cell membrane. The chain is CASP-like protein 2B2 from Arabidopsis thaliana (Mouse-ear cress).